The sequence spans 233 residues: DNA-directed RNA polymerase I subunit RPA34 (233 aa).

Serine 10, serine 12, serine 14, and serine 60 each carry phosphoserine. Residues 179 to 191 (DFHVAEEVKENKK) are compositionally biased toward basic and acidic residues. The interval 179 to 233 (DFHVAEEVKENKKEPKKRSHHDDEEESSEKKKKKKEKREKREKKDKKDKKKKHRD) is disordered. A compositionally biased stretch (basic residues) spans 208-233 (KKKKKKEKREKREKKDKKDKKKKHRD).

The protein belongs to the eukaryotic RPA34 RNA polymerase subunit family. As to quaternary structure, component of the RNA polymerase I (Pol I) complex consisting of 14 subunits: RPA135, RPA190, RPC40, RPA14, RPB5, RPO26, RPA43, RPB8, RPA12, RPB10, RPC19, RPC10, RPA49 and RPA34. The complex is composed of a horseshoe-shaped core containing ten subunits (RPA135, RPA190, RPB5, RPO26, RPB8, RPB10, RPC10, RPA12, RPC19 and RPC40) where RPA135 and RPA190 form the DNA-binding cleft. Outside of the core, RPA14 and RPA43 form the stalk that mediates interactions with transcription initiation factors and newly synthesized RNA. Forms a TFIIF-like heterodimer with RPA49; the heterodimer formed by RPA34 and RPA49 can be dissociated from the Pol I core giving rise to a 12 subunit form A* of Pol I (formerly called pol A) that shows impaired transcript elongation activity and increased sensitivity to alpha-amanitin. The heterodimer formed by RPA34 and RPA49 stabilizes subunit RPA12 and stimulates RPA12-dependent RNA cleavage.

It is found in the nucleus. The protein resides in the nucleolus. Its function is as follows. DNA-dependent RNA polymerases catalyze the transcription of DNA into RNA using the four ribonucleoside triphosphates as substrates. Component of RNA polymerase I (Pol I) which synthesizes ribosomal RNA precursors. Besides, RNA polymerase I has intrinsic RNA cleavage activity. The heterodimer formed by RPA34 and RPA49 stimulates transcript elongation by Pol I. This is DNA-directed RNA polymerase I subunit RPA34 (RPA34) from Saccharomyces cerevisiae (strain ATCC 204508 / S288c) (Baker's yeast).